Here is a 186-residue protein sequence, read N- to C-terminus: Putative glutathione-dependent formaldehyde-activating enzyme (186 aa).

The CENP-V/GFA domain maps to 20-166 (FSGGKLRCKC…FKSIGLETYD (147 aa)). Zn(2+)-binding residues include Cys-27, Cys-29, Cys-48, Cys-50, Cys-53, Cys-95, and Cys-98.

It belongs to the Gfa family. Zn(2+) serves as cofactor.

The catalysed reaction is S-(hydroxymethyl)glutathione = glutathione + formaldehyde. Its pathway is one-carbon metabolism; formaldehyde degradation; formate from formaldehyde (glutathione route): step 1/3. Catalyzes the condensation of formaldehyde and glutathione to S-hydroxymethylglutathione. The protein is Putative glutathione-dependent formaldehyde-activating enzyme of Fusarium vanettenii (strain ATCC MYA-4622 / CBS 123669 / FGSC 9596 / NRRL 45880 / 77-13-4) (Fusarium solani subsp. pisi).